The primary structure comprises 813 residues: MTEQRRSPNNRALPSPAPTSVPARARRAGGLHAGALRPLVLAMASLSAGAHAQMSGSAIPDLDQVEPVFEAAPKAPPLPVESGELVPRLAEPGKQSDAGSDAPTFIEADRMTGYSERGVELEGHAELRRDGGAIKGDKLTYDQDTDEAFAQGNVRMSRSGTLAVGPEARMKVEANEGYMLSPDYYFQQTGGSGKAERIDFLDKDRSTARHASYTTCSPDNADWYFSANRIDLDNDRQVGVAYGGVLNFFGVPIAAAPAFSFPLNDDRRSGFLPPLMGYGSRSGFDLTTPYYVNIAPNRDLTIYPRLMTERGLQLGGEYRYLGQGYNGRLRAEFLPDDKKTNSNRWAYSIQHNQNLAKGLNAYLNVNRVSDDQYPDDFNRSVSQSTLRQYTQEGGVTYNWQDFTFLARVQKFQTLRPSEPSYERVPQLNGKYIRYDLGGFDVQVEADYTRFRIPLTSTGFQQPQGERMFIQPSISYPIVRAGWYVTPKVTFNATQYQMEAASNTPTVQNNFSRVLPTMSLDSGMTFEREAPTVSRLFGVNYVQTLEPRLFYVYTPFRDQSQFPLFDTVQSDFGYGQIFSENPFTGYDRVADNNKLTGGLTTRLIEADTGIERFRGTIAQRYDFTGQRVQINGTLADPKAGFSDLLAATTIQMFRGYYLDAGVQYNPDSDRINYGNVAVSYRPESRKVINAGYRYRRPTSVTDNTAIDQFEVSSQWPITRRAYGIARFAFDLAASQMVDALAGVEYAADCWVGRVVYQRFRNTTQGYTGRVFLQVEFRGLSKIGSNPLNILRLNVPGYEPVSAKPVPTTQFDHYE.

The interval 1–29 is disordered; that stretch reads MTEQRRSPNNRALPSPAPTSVPARARRAG. The N-terminal stretch at 1–52 is a signal peptide; that stretch reads MTEQRRSPNNRALPSPAPTSVPARARRAGGLHAGALRPLVLAMASLSAGAHA.

It belongs to the LptD family. Component of the lipopolysaccharide transport and assembly complex. Interacts with LptE and LptA.

The protein localises to the cell outer membrane. Together with LptE, is involved in the assembly of lipopolysaccharide (LPS) at the surface of the outer membrane. This is LPS-assembly protein LptD from Cupriavidus necator (strain ATCC 17699 / DSM 428 / KCTC 22496 / NCIMB 10442 / H16 / Stanier 337) (Ralstonia eutropha).